The following is a 500-amino-acid chain: L-arabinose isomerase (500 aa).

Mn(2+) contacts are provided by Glu-306, Glu-333, His-349, and His-448.

Belongs to the arabinose isomerase family. It depends on Mn(2+) as a cofactor.

It catalyses the reaction beta-L-arabinopyranose = L-ribulose. Its pathway is carbohydrate degradation; L-arabinose degradation via L-ribulose; D-xylulose 5-phosphate from L-arabinose (bacterial route): step 1/3. In terms of biological role, catalyzes the conversion of L-arabinose to L-ribulose. The sequence is that of L-arabinose isomerase from Cellvibrio japonicus (strain Ueda107) (Pseudomonas fluorescens subsp. cellulosa).